Consider the following 123-residue polypeptide: Fluoride-specific ion channel FluC (123 aa).

Transmembrane regions (helical) follow at residues 6–26 (VALV…LSGV), 38–58 (LLVN…IFWG), 68–88 (FLGT…YETF), and 100–120 (LLNI…GFVL). The Na(+) site is built by Gly75 and Ser78.

It belongs to the fluoride channel Fluc/FEX (TC 1.A.43) family.

The protein localises to the cell membrane. It carries out the reaction fluoride(in) = fluoride(out). Its activity is regulated as follows. Na(+) is not transported, but it plays an essential structural role and its presence is essential for fluoride channel function. Fluoride-specific ion channel. Important for reducing fluoride concentration in the cell, thus reducing its toxicity. The protein is Fluoride-specific ion channel FluC of Pyrococcus furiosus (strain ATCC 43587 / DSM 3638 / JCM 8422 / Vc1).